Consider the following 348-residue polypeptide: 11-beta-hydroxysteroid dehydrogenase A (348 aa).

Residues 10–30 form a helical; Signal-anchor for type II membrane protein membrane-spanning segment; it reads LIAPPFTFFFLLFFLPPFQIF. Residues 13–26 carry the Proline-knob motif; the sequence is PPFTFFFLLFFLPP. Residues 54–80, D105, and 132–135 contribute to the NADP(+) site; these read GASSGIGESLAYEYAKRGACLVLAARR and NAGI. S184 is a substrate binding site. Residue Y197 is the Proton acceptor of the active site. Residues 197–201 and K201 each bind NADP(+); that span reads YNASK.

The protein belongs to the short-chain dehydrogenases/reductases (SDR) family. As to expression, expressed in seeds (at protein level). Not expressed in stem, leaf or root (at protein level).

The protein resides in the lipid droplet. It localises to the membrane. It carries out the reaction an 11beta-hydroxysteroid + NADP(+) = an 11-oxosteroid + NADPH + H(+). It catalyses the reaction an 11beta-hydroxysteroid + NAD(+) = an 11-oxosteroid + NADH + H(+). The catalysed reaction is corticosterone + NADP(+) = 11-dehydrocorticosterone + NADPH + H(+). The enzyme catalyses corticosterone + NAD(+) = 11-dehydrocorticosterone + NADH + H(+). It carries out the reaction 17beta-estradiol + NADP(+) = estrone + NADPH + H(+). It catalyses the reaction 17beta-estradiol + NAD(+) = estrone + NADH + H(+). Has dehydrogenase activity against corticosterone (11 beta-hydroxysteroid) and estradiol (17 beta-hydroxysteroid), with higher activity against estradiol. Possesses higher dehydrogenase activity with NADP(+) than NAD(+) regardless of the sterol substrate. May be involved in signal transduction regulated by various sterols. In Sesamum indicum (Oriental sesame), this protein is 11-beta-hydroxysteroid dehydrogenase A.